Consider the following 344-residue polypeptide: uncharacterized protein (344 aa).

This sequence belongs to the glycosyltransferase 2 family.

In terms of biological role, may be involved in the production of the exopolysaccharide (EPS) component of the extracellular matrix during biofilm formation. EPS is responsible for the adhesion of chains of cells into bundles. This is an uncharacterized protein from Bacillus subtilis (strain 168).